The following is a 342-amino-acid chain: 4-hydroxy-2-oxovalerate aldolase (342 aa).

Residues 7–257 (VWITEVALRD…KTGIDLYKMM (251 aa)) enclose the Pyruvate carboxyltransferase domain. 15–16 (RD) contributes to the substrate binding site. Aspartate 16 lines the Mn(2+) pocket. Catalysis depends on histidine 19, which acts as the Proton acceptor. Serine 169 and histidine 196 together coordinate substrate. Positions 196 and 198 each coordinate Mn(2+). Position 287 (tyrosine 287) interacts with substrate.

The protein belongs to the 4-hydroxy-2-oxovalerate aldolase family.

The enzyme catalyses (S)-4-hydroxy-2-oxopentanoate = acetaldehyde + pyruvate. This is 4-hydroxy-2-oxovalerate aldolase (pheE) from Geobacillus stearothermophilus (Bacillus stearothermophilus).